The primary structure comprises 270 residues: MSLSFLLLLFLSHLILSAWAHGEKHLAPKGQPGPAATGRNPAGASSSRSSRGTTSSSSSSVSSSHSASLGNQGSGLEQSSFQWSPSGRRTGSLYCRVGIGFHLQIYPDGKVNGSHEANMLSILEIFAVSQGIVGIRGVFSNKFLAMSKKGKLHASAKFTDDCKFRERFQENSYNTYASAIHRTEPAGREWYVALNKRGKAKRGCSPRVKPQHISTHFLPRFKQLEQPELSFTVTVPEKKKPPSPVKPKVPLSAPRKSPNTVKYRLKFRFG.

The N-terminal stretch at 1–20 (MSLSFLLLLFLSHLILSAWA) is a signal peptide. Residues 26–83 (LAPKGQPGPAATGRNPAGASSSRSSRGTTSSSSSSVSSSHSASLGNQGSGLEQSSFQW) are disordered. Positions 43–68 (GASSSRSSRGTTSSSSSSVSSSHSAS) are enriched in low complexity. Over residues 69 to 83 (LGNQGSGLEQSSFQW) the composition is skewed to polar residues. Asn112 carries an N-linked (GlcNAc...) asparagine glycan. Positions 236-257 (PEKKKPPSPVKPKVPLSAPRKS) are disordered.

Belongs to the heparin-binding growth factors family. In terms of assembly, interacts with FGFR1 and FGFR2. Affinity between fibroblast growth factors (FGFs) and their receptors is increased by heparan sulfate glycosaminoglycans that function as coreceptors. As to expression, expressed in skin.

The protein localises to the secreted. Plays an important role in the regulation of cell proliferation and cell differentiation. Required for normal regulation of the hair growth cycle. Functions as an inhibitor of hair elongation by promoting progression from anagen, the growth phase of the hair follicle, into catagen the apoptosis-induced regression phase. This chain is Fibroblast growth factor 5 (FGF5), found in Felis catus (Cat).